A 54-amino-acid chain; its full sequence is Hydrophobic protein RCI2A (54 aa).

Transmembrane regions (helical) follow at residues 2–22 (STAT…GVFL) and 32–52 (ICLV…IYVL).

This sequence belongs to the UPF0057 (PMP3) family.

The protein localises to the membrane. This Arabidopsis thaliana (Mouse-ear cress) protein is Hydrophobic protein RCI2A (RCI2A).